The chain runs to 1241 residues: DNA-directed RNA polymerase subunit beta (1241 aa).

A disordered region spans residues 1186–1210 (EDEIVPTAEKRSSNQDEEALELVDN). Residues 1200–1210 (QDEEALELVDN) are compositionally biased toward acidic residues.

It belongs to the RNA polymerase beta chain family. The RNAP catalytic core consists of 2 alpha, 1 beta, 1 beta' and 1 omega subunit. When a sigma factor is associated with the core the holoenzyme is formed, which can initiate transcription.

The enzyme catalyses RNA(n) + a ribonucleoside 5'-triphosphate = RNA(n+1) + diphosphate. In terms of biological role, DNA-dependent RNA polymerase catalyzes the transcription of DNA into RNA using the four ribonucleoside triphosphates as substrates. This is DNA-directed RNA polymerase subunit beta from Clostridium novyi (strain NT).